Reading from the N-terminus, the 238-residue chain is Orotidine 5'-phosphate decarboxylase (238 aa).

Substrate contacts are provided by residues Asp10, Lys32, 59-68 (DLKLHDIPNT), Thr122, Arg184, Gln193, Gly213, and Arg214. Residue Lys61 is the Proton donor of the active site.

Belongs to the OMP decarboxylase family. Type 1 subfamily. As to quaternary structure, homodimer.

The enzyme catalyses orotidine 5'-phosphate + H(+) = UMP + CO2. It functions in the pathway pyrimidine metabolism; UMP biosynthesis via de novo pathway; UMP from orotate: step 2/2. Its function is as follows. Catalyzes the decarboxylation of orotidine 5'-monophosphate (OMP) to uridine 5'-monophosphate (UMP). The sequence is that of Orotidine 5'-phosphate decarboxylase from Bacillus cereus (strain AH820).